The chain runs to 372 residues: tRNA-specific 2-thiouridylase MnmA (372 aa).

Residues 11-18 (GMSGGVDS) and Met37 contribute to the ATP site. Positions 97–99 (NPD) are interaction with target base in tRNA. Cys102 acts as the Nucleophile in catalysis. Residues Cys102 and Cys199 are joined by a disulfide bond. Residue Gly126 participates in ATP binding. The interaction with tRNA stretch occupies residues 149–151 (KDQ). The active-site Cysteine persulfide intermediate is the Cys199. Residues 309–310 (RY) form an interaction with tRNA region.

This sequence belongs to the MnmA/TRMU family.

It localises to the cytoplasm. It catalyses the reaction S-sulfanyl-L-cysteinyl-[protein] + uridine(34) in tRNA + AH2 + ATP = 2-thiouridine(34) in tRNA + L-cysteinyl-[protein] + A + AMP + diphosphate + H(+). Catalyzes the 2-thiolation of uridine at the wobble position (U34) of tRNA, leading to the formation of s(2)U34. The chain is tRNA-specific 2-thiouridylase MnmA from Staphylococcus aureus (strain Mu50 / ATCC 700699).